The primary structure comprises 373 residues: S-adenosylmethionine:tRNA ribosyltransferase-isomerase (373 aa).

Belongs to the QueA family. As to quaternary structure, monomer.

It is found in the cytoplasm. The enzyme catalyses 7-aminomethyl-7-carbaguanosine(34) in tRNA + S-adenosyl-L-methionine = epoxyqueuosine(34) in tRNA + adenine + L-methionine + 2 H(+). It participates in tRNA modification; tRNA-queuosine biosynthesis. Its function is as follows. Transfers and isomerizes the ribose moiety from AdoMet to the 7-aminomethyl group of 7-deazaguanine (preQ1-tRNA) to give epoxyqueuosine (oQ-tRNA). The sequence is that of S-adenosylmethionine:tRNA ribosyltransferase-isomerase from Prochlorococcus marinus (strain MIT 9515).